An 80-amino-acid chain; its full sequence is Translation initiation factor IF-1 (80 aa).

Residues 6-80 (RKQEHEKERG…LTRGRIVYRL (75 aa)) enclose the S1-like domain.

It belongs to the IF-1 family. Component of the 30S ribosomal translation pre-initiation complex which assembles on the 30S ribosome in the order IF-2 and IF-3, IF-1 and N-formylmethionyl-tRNA(fMet); mRNA recruitment can occur at any time during PIC assembly.

Its subcellular location is the cytoplasm. Functionally, one of the essential components for the initiation of protein synthesis. Stabilizes the binding of IF-2 and IF-3 on the 30S subunit to which N-formylmethionyl-tRNA(fMet) subsequently binds. Helps modulate mRNA selection, yielding the 30S pre-initiation complex (PIC). Upon addition of the 50S ribosomal subunit IF-1, IF-2 and IF-3 are released leaving the mature 70S translation initiation complex. This Aquifex aeolicus (strain VF5) protein is Translation initiation factor IF-1.